The following is a 223-amino-acid chain: Adenylate kinase 4, mitochondrial (223 aa).

15 to 20 (GSGKGT) is a binding site for a ribonucleoside 5'-triphosphate. Residues 35–64 (SSGHFLRENIKANTEVGDMAKQYIEKGLLV) are NMP. Residues Ser36 and Arg41 each contribute to the AMP site. Position 60 is an N6-succinyllysine (Lys60). AMP-binding positions include 62-64 (LLV), 89-92 (GFPR), and Gln96. The segment at 125–162 (RRWIHPPSGRVYNLDFNPPHVHGMDDVTGEPLVQQEDD) is LID. A ribonucleoside 5'-triphosphate is bound by residues Arg126 and 135-136 (VY). Arg170 serves as a coordination point for AMP. Position 175 is an N6-acetyllysine (Lys175). Residues Lys179 and Lys186 each carry the N6-acetyllysine; alternate modification. N6-succinyllysine; alternate is present on residues Lys179 and Lys186. Thr199 contacts a ribonucleoside 5'-triphosphate.

It belongs to the adenylate kinase family. AK3 subfamily. As to quaternary structure, monomer. Interacts with SLC25A5/ANT2.

Its subcellular location is the mitochondrion matrix. It catalyses the reaction a ribonucleoside 5'-phosphate + ATP = a ribonucleoside 5'-diphosphate + ADP. The catalysed reaction is AMP + ATP = 2 ADP. It carries out the reaction GTP + AMP = GDP + ADP. The enzyme catalyses CMP + ATP = CDP + ADP. It catalyses the reaction GTP + CMP = CDP + GDP. The catalysed reaction is dAMP + ATP = dADP + ADP. It carries out the reaction dCMP + ATP = dCDP + ADP. The enzyme catalyses a 2'-deoxyribonucleoside 5'-diphosphate + ATP = a 2'-deoxyribonucleoside 5'-triphosphate + ADP. It catalyses the reaction a ribonucleoside 5'-diphosphate + ATP = a ribonucleoside 5'-triphosphate + ADP. The catalysed reaction is GDP + ATP = GTP + ADP. It carries out the reaction CDP + GTP = CTP + GDP. The enzyme catalyses CDP + ATP = CTP + ADP. It catalyses the reaction UDP + ATP = UTP + ADP. The catalysed reaction is GTP + UDP = UTP + GDP. It carries out the reaction dADP + GTP = dATP + GDP. The enzyme catalyses dCDP + GTP = dCTP + GDP. It catalyses the reaction dCDP + ATP = dCTP + ADP. The catalysed reaction is dGDP + ATP = dGTP + ADP. It carries out the reaction dTDP + GTP = dTTP + GDP. The enzyme catalyses dTDP + ATP = dTTP + ADP. Its function is as follows. Broad-specificity mitochondrial nucleoside phosphate kinase involved in cellular nucleotide homeostasis by catalyzing nucleoside-phosphate interconversions. Similar to other adenylate kinases, preferentially catalyzes the phosphorylation of the nucleoside monophosphate AMP with ATP as phosphate donor to produce ADP. Phosphorylates only AMP when using GTP as phosphate donor. In vitro, can also catalyze the phosphorylation of CMP, dAMP and dCMP and use GTP as an alternate phosphate donor. Moreover, exhibits a diphosphate kinase activity, producing ATP, CTP, GTP, UTP, TTP, dATP, dCTP and dGTP from the corresponding diphosphate substrates with either ATP or GTP as phosphate donors. Plays a role in controlling cellular ATP levels by regulating phosphorylation and activation of the energy sensor protein kinase AMPK. Plays a protective role in the cellular response to oxidative stress. This is Adenylate kinase 4, mitochondrial from Bos taurus (Bovine).